Consider the following 294-residue polypeptide: Probable 2-(5''-triphosphoribosyl)-3'-dephosphocoenzyme-A synthase (294 aa).

It belongs to the CitG/MdcB family.

The catalysed reaction is 3'-dephospho-CoA + ATP = 2'-(5''-triphospho-alpha-D-ribosyl)-3'-dephospho-CoA + adenine. This chain is Probable 2-(5''-triphosphoribosyl)-3'-dephosphocoenzyme-A synthase, found in Streptococcus equi subsp. zooepidemicus (strain MGCS10565).